The following is a 1159-amino-acid chain: Ferroxidase HEPHL1 (1159 aa).

Residues 1 to 23 form the signal peptide; that stretch reads MFLKQPGGCILLQFLGLLGLVGA. Plastocyanin-like domains lie at 24 to 206, 217 to 365, 378 to 560, 570 to 718, 730 to 906, and 914 to 1092; these read VTRT…LLVC, MRTD…VGNC, QRRY…LLVC, TQKG…ISSC, MLRT…LITC, and KGRR…VPSQ. The Extracellular portion of the chain corresponds to 24-1114; the sequence is VTRTYYIGIV…KNLRPRGAKA (1091 aa). Positions 126 and 128 each coordinate Cu cation. N-linked (GlcNAc...) asparagine glycosylation occurs at Asn160. A disulfide bond links Cys180 and Cys206. Residues His186 and His188 each coordinate Cu cation. Asn235 carries N-linked (GlcNAc...) asparagine glycosylation. A disulfide bridge connects residues Cys284 and Cys365. Cu cation contacts are provided by His303, Cys346, and His351. N-linked (GlcNAc...) asparagine glycosylation is present at Asn406. Residues Cys534 and Cys560 are joined by a disulfide bond. Asn588 carries an N-linked (GlcNAc...) asparagine glycan. Residues Cys637 and Cys718 are joined by a disulfide bond. The Cu cation site is built by His656, Cys699, His704, and Met709. An N-linked (GlcNAc...) asparagine glycan is attached at Asn771. Cys880 and Cys906 are disulfide-bonded. An N-linked (GlcNAc...) asparagine glycan is attached at Asn934. The Cu cation site is built by His1002, His1005, His1007, His1047, Cys1048, His1049, His1053, and Met1058. Residues 1115 to 1135 form a helical membrane-spanning segment; sequence ALVILFILGLLLLVATVVLAL. The Cytoplasmic portion of the chain corresponds to 1136–1159; it reads RLRSSRRQMAYREVQSCALPTDAL.

Belongs to the multicopper oxidase family. The cofactor is Cu cation.

It is found in the membrane. It carries out the reaction 4 Fe(2+) + O2 + 4 H(+) = 4 Fe(3+) + 2 H2O. Functionally, is a copper-binding glycoprotein with ferroxidase activity. It oxidizes Fe(2+) to Fe(3+) without releasing radical oxygen species. May be involved in the regulation of intracellular iron content. This Mus musculus (Mouse) protein is Ferroxidase HEPHL1 (Hephl1).